A 453-amino-acid chain; its full sequence is Putative sodium-coupled neutral amino acid transporter 11 (453 aa).

The segment covering 1–10 (MSYQQPQLSG) has biased composition (polar residues). A disordered region spans residues 1–34 (MSYQQPQLSGPLQRETDSSDRESLISGHEHGGKS). A compositionally biased stretch (basic and acidic residues) spans 14 to 32 (RETDSSDRESLISGHEHGG). Helical transmembrane passes span 39 to 59 (AVFNVVNSVIGSGIIGLPYSM), 66 to 86 (LGILLLFLVSYITDFSLVLLI), 106 to 126 (GFPGYLLLSTLQFMYPFIAMI), 150 to 170 (GWFISRHFIIVVSTVTCTLPL), 179 to 199 (LGKISFISTILTTVILGIVMT), 222 to 242 (AIQAIGVMSFAFICHHNCFLV), 262 to 282 (ILVSVFICVLFATCGYFTFTG), 299 to 319 (VTFGRFCYGITVILTYPIECF), 337 to 357 (VFHTVLAVLIVTAATLVSLMI), 359 to 379 (CLGIVLELNGVLCAAPLIFII), and 398 to 418 (IMACVMFPVGAVVMVVGFVMA). Asparagine 438 and asparagine 443 each carry an N-linked (GlcNAc...) asparagine glycan.

This sequence belongs to the amino acid/polyamine transporter 2 family.

It localises to the membrane. Functionally, putative sodium-dependent amino acid/proton antiporter. The protein is Putative sodium-coupled neutral amino acid transporter 11 (Slc38a11) of Mus musculus (Mouse).